The chain runs to 150 residues: Large ribosomal subunit protein bL9 (150 aa).

Belongs to the bacterial ribosomal protein bL9 family.

Functionally, binds to the 23S rRNA. This Burkholderia thailandensis (strain ATCC 700388 / DSM 13276 / CCUG 48851 / CIP 106301 / E264) protein is Large ribosomal subunit protein bL9.